Consider the following 374-residue polypeptide: uncharacterized protein (374 aa).

29–36 lines the ATP pocket; the sequence is GSLNSGKS.

It belongs to the archaeal ATPase family.

This is an uncharacterized protein from Methanocaldococcus jannaschii (strain ATCC 43067 / DSM 2661 / JAL-1 / JCM 10045 / NBRC 100440) (Methanococcus jannaschii).